We begin with the raw amino-acid sequence, 178 residues long: Ribosome maturation factor RimM (178 aa).

In terms of domain architecture, PRC barrel spans 104–177 (SDEYYFYEVI…KIVVKLPEWL (74 aa)).

This sequence belongs to the RimM family. Binds ribosomal protein uS19.

The protein resides in the cytoplasm. Its function is as follows. An accessory protein needed during the final step in the assembly of 30S ribosomal subunit, possibly for assembly of the head region. Essential for efficient processing of 16S rRNA. May be needed both before and after RbfA during the maturation of 16S rRNA. It has affinity for free ribosomal 30S subunits but not for 70S ribosomes. This chain is Ribosome maturation factor RimM, found in Thermosipho melanesiensis (strain DSM 12029 / CIP 104789 / BI429).